Here is a 183-residue protein sequence, read N- to C-terminus: Translation initiation factor IF-3 (183 aa).

Polar residues predominate over residues 1–13; sequence MKQPDRNQQQGAK. Residues 1-24 are disordered; the sequence is MKQPDRNQQQGAKSNRPAINDEIR.

This sequence belongs to the IF-3 family. Monomer.

Its subcellular location is the cytoplasm. In terms of biological role, IF-3 binds to the 30S ribosomal subunit and shifts the equilibrium between 70S ribosomes and their 50S and 30S subunits in favor of the free subunits, thus enhancing the availability of 30S subunits on which protein synthesis initiation begins. This chain is Translation initiation factor IF-3, found in Acinetobacter baylyi (strain ATCC 33305 / BD413 / ADP1).